The sequence spans 89 residues: UPF0367 protein CYA_1023 (89 aa).

Residues 69-89 form a disordered region; it reads TKSGGPGAPGTRPGFLAQLQG.

The protein belongs to the UPF0367 family.

This chain is UPF0367 protein CYA_1023, found in Synechococcus sp. (strain JA-3-3Ab) (Cyanobacteria bacterium Yellowstone A-Prime).